The sequence spans 159 residues: 2-C-methyl-D-erythritol 2,4-cyclodiphosphate synthase (159 aa).

A divalent metal cation contacts are provided by Asp8 and His10. 4-CDP-2-C-methyl-D-erythritol 2-phosphate-binding positions include 8 to 10 (DVH) and 34 to 35 (HS). His42 provides a ligand contact to a divalent metal cation. Residues 56–58 (DIG), 61–65 (FPDTD), 100–106 (AQAPKML), 132–135 (TTTE), Phe139, and Arg142 contribute to the 4-CDP-2-C-methyl-D-erythritol 2-phosphate site.

This sequence belongs to the IspF family. In terms of assembly, homotrimer. It depends on a divalent metal cation as a cofactor.

It carries out the reaction 4-CDP-2-C-methyl-D-erythritol 2-phosphate = 2-C-methyl-D-erythritol 2,4-cyclic diphosphate + CMP. Its pathway is isoprenoid biosynthesis; isopentenyl diphosphate biosynthesis via DXP pathway; isopentenyl diphosphate from 1-deoxy-D-xylulose 5-phosphate: step 4/6. Its function is as follows. Involved in the biosynthesis of isopentenyl diphosphate (IPP) and dimethylallyl diphosphate (DMAPP), two major building blocks of isoprenoid compounds. Catalyzes the conversion of 4-diphosphocytidyl-2-C-methyl-D-erythritol 2-phosphate (CDP-ME2P) to 2-C-methyl-D-erythritol 2,4-cyclodiphosphate (ME-CPP) with a corresponding release of cytidine 5-monophosphate (CMP). The sequence is that of 2-C-methyl-D-erythritol 2,4-cyclodiphosphate synthase from Salmonella choleraesuis (strain SC-B67).